We begin with the raw amino-acid sequence, 289 residues long: CCR4-associated factor 16 (289 aa).

Residues 7-249 enclose the ABC transporter domain; that stretch reads IEVRNLTYKF…SEVVNAKVNG (243 aa). 41–48 lines the ATP pocket; that stretch reads GANGAGKS.

The protein belongs to the ABC transporter superfamily. Interacts with CCR4 and SSN2.

It is found in the cytoplasm. Its subcellular location is the nucleus. The polypeptide is CCR4-associated factor 16 (CAF16) (Saccharomyces cerevisiae (strain ATCC 204508 / S288c) (Baker's yeast)).